Here is a 138-residue protein sequence, read N- to C-terminus: Histone H3-like centromeric protein A (138 aa).

The disordered stretch occupies residues 1-40 (MGPRRQKRKPETPRRRPASPAPAAPRPTPSLGTSSRPLAR). At Gly2 the chain carries N,N,N-trimethylglycine. Ser19 is modified (phosphoserine). A compositionally biased stretch (pro residues) spans 19–28 (SPAPAAPRPT). Residues 37 to 52 (PLARRRHTVLKEIRTL) are important for flexibility of DNA ends that protrude from nucleosomes. Residues 39 to 138 (ARRRHTVLKE…RIRGIQEGLG (100 aa)) form an H3-like region. The segment at 73–114 (CVQFTRGVDFNWQAQALLALQEAAEAFLVHLFEDAYLLSLHA) is CATD.

Belongs to the histone H3 family. As to quaternary structure, component of centromeric nucleosomes, where DNA is wrapped around a histone octamer core. The octamer contains two molecules each of H2A, H2B, CENPA and H4 assembled in one CENPA-H4 heterotetramer and two H2A-H2B heterodimers. CENPA modulates the DNA-binding characteristics of nucleosomes so that protruding DNA ends have higher flexibility than in nucleosomes containing conventional histone H3. Inhibits binding of histone H1 to nucleosomes, since histone H1 binds preferentially to rigid DNA linkers that protrude from nucleosomes. Nucleosomes containing CENPA also contain histone H2A variants such as MACROH2A and H2A.Z/H2AZ1. The CENPA-H4 heterotetramer is more compact and structurally more rigid than corresponding H3-H4 heterotetramers. Can assemble into nucleosomes that contain both CENPA and histone H3.3; these nucleosomes interact with a single CENPC chain. Heterotrimer composed of HJURP, CENPA and histone H4, where HJURP interacts with the dimer formed by CENPA and histone H4 and prevents tetramerization of CENPA and H4. Component of the CENPA-NAC complex, at least composed of CENPA, CENPC, CENPH, CENPM, CENPN, CENPT and CENPU. Interacts (via CATD domain) with HJURP; the interaction is direct and is required for its localization to centromeres. Interacts with CENPC, CENPN and CENPT; interaction is direct. Part of a centromere complex consisting of CENPA, CENPT and CENPW. Identified in centromere complexes containing histones H2A, H2B and H4, and at least CENPA, CENPB, CENPC, CENPT, CENPN, HJURP, SUPT16H, SSRP1 and RSF1. Can self-associate. The CENPA-H4 heterotetramer can bind DNA by itself (in vitro). Interacts with CDK1, PPP1CA and RBBP7. Trimethylated by NTMT1 at the N-terminal glycine after cleavage of Met-1. Methylation is low before incorporation into nucleosomes and increases with cell cycle progression, with the highest levels in mitotic nucleosomes. Post-translationally, poly-ADP-ribosylated by PARP1.

It localises to the nucleus. Its subcellular location is the chromosome. It is found in the centromere. Its function is as follows. Histone H3-like nucleosomal protein that is specifically found in centromeric nucleosomes. Replaces conventional H3 in the nucleosome core of centromeric chromatin that serves as an assembly site for the inner kinetochore. The presence of CENPA subtly modifies the nucleosome structure and the way DNA is wrapped around the nucleosome and gives rise to protruding DNA ends that are less well-ordered and rigid compared to nucleosomes containing histone H3. May serve as an epigenetic mark that propagates centromere identity through replication and cell division. Required for recruitment and assembly of kinetochore proteins, and as a consequence required for progress through mitosis, chromosome segregation and cytokinesis. This is Histone H3-like centromeric protein A (CENPA) from Bos taurus (Bovine).